Consider the following 52-residue polypeptide: MSEIKKALNTLEIEDFDAIEMVDVDAMPENEALEIMGASCTTCVCTCSCCTT.

Residues 1-38 constitute a propeptide that is removed on maturation; sequence MSEIKKALNTLEIEDFDAIEMVDVDAMPENEALEIMGA. Residues 39–40 constitute a cross-link (thiazole-4-carboxylic acid (Ser-Cys)); it reads SC. A cross-link (pyridine-2,5-dicarboxylic acid (Ser-Cys) (with S-48)) is located at residues 39–47; that stretch reads SCTTCVCTC. The pyridine-2,5-dicarboxylic acid (Ser-Ser) (with C-47) cross-link spans 39–48; it reads SCTTCVCTCS. At T42 the chain carries (Z)-2,3-didehydrobutyrine. The segment at residues 42-43 is a cross-link (thiazole-4-carboxylic acid (Thr-Cys)); sequence TC. V44 carries the post-translational modification 3-hydroxyvaline (Val); partial. Positions 44 to 45 form a cross-link, thiazole-4-carboxylic acid (Val-Cys); sequence VC. O-methylthreonine; partial is present on T46. The segment at residues 46–47 is a cross-link (thiazole-4-carboxylic acid (Thr-Cys)); sequence TC. A cross-link (thiazole-4-carboxylic acid (Ser-Cys)) is located at residues 48–49; that stretch reads SC. The thiazole-4-carboxylic acid (Cys-Cys) cross-link spans 49–50; that stretch reads CC. T51 bears the (Z)-2,3-didehydrobutyrine mark. Residue T52 is modified to 1-amino-2-propanone; alternate. T52 bears the Decarboxylated threonine; alternate mark.

Belongs to the thiocillin family. Maturation of thiazole and oxazole containing antibiotics involves the enzymatic condensation of a Cys, Ser or Thr with the alpha-carbonyl of the preceding amino acid to form a thioether or ether bond, then dehydration to form a double bond with the alpha-amino nitrogen. Thiazoline or oxazoline ring are dehydrogenated to form thiazole or oxazole rings. In terms of processing, maturation of pyridinyl containing antibiotics involves the cross-linking of a Ser and a Cys-Ser pair usually separated by 7 or 8 residues along the peptide chain. The Ser residues are dehydrated to didehydroalanines, then bonded between their beta carbons. The alpha carbonyl of the Cys condenses with alpha carbon of the first Ser to form a pyridinyl ring. The ring may be multiply dehydrogenated to form a pyridine ring with loss of the amino nitrogen of the first Ser. Post-translationally, the 8 possible modification isomers, differing in the presence of modifications at three positions, have been characterized in PubMed:19196969. Val-44 is modified to 3-hydroxyvaline in forms thiocillin I, thiocillin II, YM-266183, and YM-266184. Thr-46 is modified to O-methylthreonine in forms thiocillin II, thiocillin III, thiocillin IV, and YM-266184. Thr-52 is decarboxylated to (R)-1-aminopropan-2-ol in forms micrococcin P1, thiocillin I, thiocillin II, and thiocillin III. Thr-52 is decarboxylated and oxidized to 1-amino-2-propanone in forms micrococcin P2, YM-266183, YM-266184. and thiocillin IV. The structure of 2,3-didehydrobutyrines is not discussed in PubMed:19196969. However, in Fig. 3 the residues are diagrammed as Z-isomers.

It is found in the secreted. Functionally, has bacteriocidal activity against Gram-positive bacteria, but not against Gram-negative bacteria. Inhibits bacterial protein biosynthesis by acting on the elongation factor Tu (EF-Tu). The sequence is that of Thiocillin from Bacillus cereus (strain ATCC 14579 / DSM 31 / CCUG 7414 / JCM 2152 / NBRC 15305 / NCIMB 9373 / NCTC 2599 / NRRL B-3711).